Reading from the N-terminus, the 278-residue chain is Indole-3-glycerol phosphate synthase (278 aa).

Belongs to the TrpC family.

It catalyses the reaction 1-(2-carboxyphenylamino)-1-deoxy-D-ribulose 5-phosphate + H(+) = (1S,2R)-1-C-(indol-3-yl)glycerol 3-phosphate + CO2 + H2O. It participates in amino-acid biosynthesis; L-tryptophan biosynthesis; L-tryptophan from chorismate: step 4/5. This is Indole-3-glycerol phosphate synthase from Pseudomonas fluorescens (strain Pf0-1).